The following is a 483-amino-acid chain: Glutamate--tRNA ligase (483 aa).

Positions 11–21 (PSPTGHLHIGN) match the 'HIGH' region motif. 4 residues coordinate Zn(2+): C108, C110, H135, and D137. The 'KMSKS' region signature appears at 252 to 256 (KLSKR). K255 lines the ATP pocket.

The protein belongs to the class-I aminoacyl-tRNA synthetase family. Glutamate--tRNA ligase type 1 subfamily. Monomer. The cofactor is Zn(2+).

It is found in the cytoplasm. It catalyses the reaction tRNA(Glu) + L-glutamate + ATP = L-glutamyl-tRNA(Glu) + AMP + diphosphate. Its function is as follows. Catalyzes the attachment of glutamate to tRNA(Glu) in a two-step reaction: glutamate is first activated by ATP to form Glu-AMP and then transferred to the acceptor end of tRNA(Glu). The polypeptide is Glutamate--tRNA ligase (Bacillus subtilis (strain 168)).